A 345-amino-acid chain; its full sequence is Phenylalanine--tRNA ligase alpha subunit (345 aa).

Glu-262 provides a ligand contact to Mg(2+).

Belongs to the class-II aminoacyl-tRNA synthetase family. Phe-tRNA synthetase alpha subunit type 1 subfamily. In terms of assembly, tetramer of two alpha and two beta subunits. Requires Mg(2+) as cofactor.

The protein localises to the cytoplasm. It carries out the reaction tRNA(Phe) + L-phenylalanine + ATP = L-phenylalanyl-tRNA(Phe) + AMP + diphosphate + H(+). The sequence is that of Phenylalanine--tRNA ligase alpha subunit from Ehrlichia canis (strain Jake).